The sequence spans 933 residues: uncharacterized protein (933 aa).

Residues 244-255 (KKDIGAKPKPVD) show a composition bias toward basic and acidic residues. 2 disordered regions span residues 244-277 (KKDIGAKPKPVDDVSPQPVRARTPPENTVVELPD) and 343-364 (SAPHQPSSQHAQMGRHSQEWKG). Polar residues predominate over residues 343–353 (SAPHQPSSQHA). The helical transmembrane segment at 771–791 (VIHGMVLMFAGGKLLFGGCVL) threads the bilayer. The segment covering 890–907 (DKIEKEPPPSPEKVKPPE) has biased composition (basic and acidic residues). The tract at residues 890 to 933 (DKIEKEPPPSPEKVKPPEIELQPFTKMRRSSKKTAGFKKLNSKK) is disordered. The span at 915–933 (KMRRSSKKTAGFKKLNSKK) shows a compositional bias: basic residues.

The protein localises to the membrane. This is an uncharacterized protein from Mus musculus (Mouse).